Reading from the N-terminus, the 161-residue chain is UPF0178 protein BOV_1904 (161 aa).

The protein belongs to the UPF0178 family.

This Brucella ovis (strain ATCC 25840 / 63/290 / NCTC 10512) protein is UPF0178 protein BOV_1904.